Reading from the N-terminus, the 523-residue chain is 2-isopropylmalate synthase (523 aa).

The region spanning 5 to 267 (VIIFDTTLRD…HTAINHQEIW (263 aa)) is the Pyruvate carboxyltransferase domain. Aspartate 14, histidine 202, histidine 204, and asparagine 238 together coordinate Mn(2+). The segment at 392–523 (RLDYFSVQSG…QHNENNKETV (132 aa)) is regulatory domain.

Belongs to the alpha-IPM synthase/homocitrate synthase family. LeuA type 1 subfamily. Homodimer. Requires Mn(2+) as cofactor.

The protein localises to the cytoplasm. It carries out the reaction 3-methyl-2-oxobutanoate + acetyl-CoA + H2O = (2S)-2-isopropylmalate + CoA + H(+). The protein operates within amino-acid biosynthesis; L-leucine biosynthesis; L-leucine from 3-methyl-2-oxobutanoate: step 1/4. Catalyzes the condensation of the acetyl group of acetyl-CoA with 3-methyl-2-oxobutanoate (2-ketoisovalerate) to form 3-carboxy-3-hydroxy-4-methylpentanoate (2-isopropylmalate). This chain is 2-isopropylmalate synthase, found in Escherichia coli (strain SMS-3-5 / SECEC).